The following is a 276-amino-acid chain: Rhomboid protease GlpG (276 aa).

Transmembrane regions (helical) follow at residues 94 to 114 (GPVT…MQIL), 142 to 162 (ALMH…WYLG), 169 to 189 (LGSG…GYVQ), 192 to 212 (FSGP…GYVW), 229 to 249 (LIIF…GMSM), and 250 to 270 (ANGA…VDSL). The active-site Nucleophile is serine 201. The active site involves histidine 254.

It belongs to the peptidase S54 family.

The protein resides in the cell inner membrane. The catalysed reaction is Cleaves type-1 transmembrane domains using a catalytic dyad composed of serine and histidine that are contributed by different transmembrane domains.. Rhomboid-type serine protease that catalyzes intramembrane proteolysis. In Escherichia coli (strain 55989 / EAEC), this protein is Rhomboid protease GlpG.